Here is an 88-residue protein sequence, read N- to C-terminus: Small ribosomal subunit protein bS20 (88 aa).

Disordered stretches follow at residues 1-29 (MANTAQARKRARQAVKQNEHNSSLRSKLR) and 69-88 (KNTASRQKSRLSAAIKAMAA).

This sequence belongs to the bacterial ribosomal protein bS20 family.

Its function is as follows. Binds directly to 16S ribosomal RNA. This Polynucleobacter asymbioticus (strain DSM 18221 / CIP 109841 / QLW-P1DMWA-1) (Polynucleobacter necessarius subsp. asymbioticus) protein is Small ribosomal subunit protein bS20.